The primary structure comprises 169 residues: Disulfide bond formation protein B (169 aa).

The Cytoplasmic portion of the chain corresponds to 1–13; it reads MSQLQQFCHNRFS. Residues 14 to 30 form a helical membrane-spanning segment; that stretch reads WGLLLLSAIGLELAALF. Residues 31 to 48 lie on the Periplasmic side of the membrane; sequence FQYGMDLAPCVMCIYIRV. C40 and C43 form a disulfide bridge. The chain crosses the membrane as a helical span at residues 49-64; sequence AVLGIILAALIGILQP. Residues 65-71 are Cytoplasmic-facing; that stretch reads KVWLLRL. Residues 72–89 traverse the membrane as a helical segment; sequence VGMAGWAVSAVWGFKLAY. The Periplasmic portion of the chain corresponds to 90–144; that stretch reads ELNQMQVNPSPFATCSFYPEFPSFMPLDTWLPSVFSPTGMCSDSPWSWLSVSMAQ. An intrachain disulfide couples C104 to C130. The chain crosses the membrane as a helical span at residues 145–163; sequence WMMLGFAIYGVIWLLMLLP. The Cytoplasmic segment spans residues 164–169; the sequence is ALKSAK.

Belongs to the DsbB family.

It localises to the cell inner membrane. Required for disulfide bond formation in some periplasmic proteins. Acts by oxidizing the DsbA protein. The protein is Disulfide bond formation protein B of Shewanella frigidimarina (strain NCIMB 400).